The primary structure comprises 98 residues: Large ribosomal subunit protein bL28 (98 aa).

Belongs to the bacterial ribosomal protein bL28 family.

The sequence is that of Large ribosomal subunit protein bL28 from Phenylobacterium zucineum (strain HLK1).